A 346-amino-acid chain; its full sequence is uncharacterized protein (346 aa).

A signal peptide spans 1-27 (MKFNKISLSVSTALLAAGLAVSGSANA).

This is an uncharacterized protein from Haemophilus influenzae (strain ATCC 51907 / DSM 11121 / KW20 / Rd).